Here is a 440-residue protein sequence, read N- to C-terminus: Translation initiation factor eIF2B subunit gamma (440 aa).

Belongs to the eIF-2B gamma/epsilon subunits family. Component of the translation initiation factor 2B (eIF2B) complex which is a heterodecamer of two sets of five different subunits: alpha, beta, gamma, delta and epsilon. Subunits alpha, beta and delta comprise a regulatory subcomplex and subunits epsilon and gamma comprise a catalytic subcomplex. Within the complex, the hexameric regulatory complex resides at the center, with the two heterodimeric catalytic subcomplexes bound on opposite sides.

It is found in the cytoplasm. It localises to the cytosol. In terms of biological role, acts as a component of the translation initiation factor 2B (eIF2B) complex, which catalyzes the exchange of GDP for GTP on the eukaryotic initiation factor 2 (eIF2) complex gamma subunit. Its guanine nucleotide exchange factor activity is repressed when bound to eIF2 complex phosphorylated on the alpha subunit, thereby limiting the amount of methionyl-initiator methionine tRNA available to the ribosome and consequently global translation is repressed. This Dictyostelium discoideum (Social amoeba) protein is Translation initiation factor eIF2B subunit gamma (eif2b3).